The following is a 148-amino-acid chain: Lysozyme-like protein 6 (148 aa).

An N-terminal signal peptide occupies residues 1–19 (MLKALFICVASCLLVVNDG). The C-type lysozyme domain occupies 20-148 (NIIHRCSLAK…SYWMTGCHLG (129 aa)). Cystine bridges form between C25–C145, C49–C133, C83–C98, and C94–C112. The active site involves E54. N58 is a glycosylation site (N-linked (GlcNAc...) asparagine). D71 is an active-site residue.

Belongs to the glycosyl hydrolase 22 family. As to quaternary structure, monomer. As to expression, expressed strongly in testis and epididymis and weakly in seminal vesicle, vas deferens, kidney and spleen. Highly expressed in primary spermatocytes and round spermatids (at protein level).

The protein localises to the secreted. It is found in the cell surface. The protein resides in the cell projection. It localises to the cilium. Its subcellular location is the flagellum. It catalyses the reaction Hydrolysis of (1-&gt;4)-beta-linkages between N-acetylmuramic acid and N-acetyl-D-glucosamine residues in a peptidoglycan and between N-acetyl-D-glucosamine residues in chitodextrins.. Functionally, may be involved sperm-egg plasma membrane adhesion and fusion during fertilization. Exhibits bacteriolytic activity in vitro against Micrococcus luteus and Staphylococcus aureus. Shows weak bacteriolytic activity against Gram-positive bacteria at physiological pH. Bacteriolytic activity is pH-dependent, with a maximum at around pH 5.6. This Mus musculus (Mouse) protein is Lysozyme-like protein 6 (Lyzl6).